A 231-amino-acid chain; its full sequence is NADH-ubiquinone oxidoreductase chain 4 (231 aa).

Transmembrane regions (helical) follow at residues 1–21, 34–54, 62–82, 86–106, 118–138, 169–189, and 211–231; these read PIAGSMVLAAILLKLGGYGMI, MFIPFITLSLWGAVLANLTCL, LIAYSSISHMGLVVAAISIQT, LSGAMALMIAHGFTSSALFCL, ILILTRGFHNILPMTTTWWLL, TIILLSLSILITSIYSLHIFL, and LLMTLHIIPLILLSMKPELVM.

It belongs to the complex I subunit 4 family.

The protein resides in the mitochondrion membrane. It carries out the reaction a ubiquinone + NADH + 5 H(+)(in) = a ubiquinol + NAD(+) + 4 H(+)(out). In terms of biological role, core subunit of the mitochondrial membrane respiratory chain NADH dehydrogenase (Complex I) that is believed to belong to the minimal assembly required for catalysis. Complex I functions in the transfer of electrons from NADH to the respiratory chain. The immediate electron acceptor for the enzyme is believed to be ubiquinone. This Causus rhombeatus (Rhombic night adder) protein is NADH-ubiquinone oxidoreductase chain 4 (MT-ND4).